We begin with the raw amino-acid sequence, 150 residues long: D-aminoacyl-tRNA deacylase (150 aa).

The Gly-cisPro motif, important for rejection of L-amino acids signature appears at 138–139 (GP).

This sequence belongs to the DTD family. Homodimer.

It is found in the cytoplasm. The catalysed reaction is glycyl-tRNA(Ala) + H2O = tRNA(Ala) + glycine + H(+). The enzyme catalyses a D-aminoacyl-tRNA + H2O = a tRNA + a D-alpha-amino acid + H(+). An aminoacyl-tRNA editing enzyme that deacylates mischarged D-aminoacyl-tRNAs. Also deacylates mischarged glycyl-tRNA(Ala), protecting cells against glycine mischarging by AlaRS. Acts via tRNA-based rather than protein-based catalysis; rejects L-amino acids rather than detecting D-amino acids in the active site. By recycling D-aminoacyl-tRNA to D-amino acids and free tRNA molecules, this enzyme counteracts the toxicity associated with the formation of D-aminoacyl-tRNA entities in vivo and helps enforce protein L-homochirality. This Chlorobium limicola (strain DSM 245 / NBRC 103803 / 6330) protein is D-aminoacyl-tRNA deacylase.